A 931-amino-acid polypeptide reads, in one-letter code: Mitochondrial cox1 translation regulator ppr4 (931 aa).

The N-terminal 16 residues, Met1–Phe16, are a transit peptide targeting the mitochondrion. PPR repeat units follow at residues Asn247–Thr277, Ser282–Ile316, His429–Val461, Asp462–Thr496, Ser497–Glu531, Asn598–Pro632, and Pro683–Tyr713.

As to quaternary structure, component of the MRH5C complex, composed of mrh5, ppr4, mtf2, and sls1. Proteins mtf2 and sls1 form a subcomplex that serves as a scaffold to bring mrh5 and ppr4 together. The MRH5C complex associates with the small subunit of the mitochondrial ribosome.

The protein resides in the mitochondrion. In terms of biological role, RNA-binding translation activation factor that as part of the MRH5C complex specifically recruits cox1 mRNA to the mitochondrial ribosome for translation initiation. In Schizosaccharomyces pombe (strain 972 / ATCC 24843) (Fission yeast), this protein is Mitochondrial cox1 translation regulator ppr4.